Consider the following 211-residue polypeptide: Protein CHLORORESPIRATORY REDUCTION 41, chloroplastic (211 aa).

A chloroplast-targeting transit peptide spans methionine 1–lysine 38. A coiled-coil region spans residues alanine 136–methionine 163.

As to quaternary structure, biogenesis factor component of the plastidial NDH subcomplex A.

It is found in the plastid. It localises to the chloroplast. Its subcellular location is the chloroplast stroma. Required for both formation and activity of the chloroplast NAD(P)H dehydrogenase (NDH) complex of the photosynthetic electron transport chain. Functions in assembly or stabilization of the NDH complex; probably involved, together with NdhO and NdhH, in the formation of an NDH subcomplex A assembly intermediate (NAI500). The sequence is that of Protein CHLORORESPIRATORY REDUCTION 41, chloroplastic from Arabidopsis thaliana (Mouse-ear cress).